The following is a 264-amino-acid chain: Thymidylate synthase (264 aa).

Residue Arg-21 coordinates dUMP. Residue His-51 coordinates (6R)-5,10-methylene-5,6,7,8-tetrahydrofolate. 126-127 (RR) lines the dUMP pocket. Cys-146 serves as the catalytic Nucleophile. Residues 166–169 (RSCD), Asn-177, and 207–209 (HLY) contribute to the dUMP site. Asp-169 contributes to the (6R)-5,10-methylene-5,6,7,8-tetrahydrofolate binding site. Ala-263 contributes to the (6R)-5,10-methylene-5,6,7,8-tetrahydrofolate binding site.

This sequence belongs to the thymidylate synthase family. Bacterial-type ThyA subfamily. As to quaternary structure, homodimer.

It is found in the cytoplasm. The enzyme catalyses dUMP + (6R)-5,10-methylene-5,6,7,8-tetrahydrofolate = 7,8-dihydrofolate + dTMP. Its pathway is pyrimidine metabolism; dTTP biosynthesis. Catalyzes the reductive methylation of 2'-deoxyuridine-5'-monophosphate (dUMP) to 2'-deoxythymidine-5'-monophosphate (dTMP) while utilizing 5,10-methylenetetrahydrofolate (mTHF) as the methyl donor and reductant in the reaction, yielding dihydrofolate (DHF) as a by-product. This enzymatic reaction provides an intracellular de novo source of dTMP, an essential precursor for DNA biosynthesis. This Cronobacter sakazakii (strain ATCC BAA-894) (Enterobacter sakazakii) protein is Thymidylate synthase.